A 117-amino-acid polypeptide reads, in one-letter code: Antitoxin RelB3 (117 aa).

Functionally, antitoxin component of a type II toxin-antitoxin (TA) system. Neutralizes the effect of cognate toxin RelE3, but no other RelE or ParE toxin. This Caulobacter vibrioides (strain ATCC 19089 / CIP 103742 / CB 15) (Caulobacter crescentus) protein is Antitoxin RelB3 (relB3).